The chain runs to 276 residues: Ribosomal RNA small subunit methyltransferase A (276 aa).

Positions 27, 29, 54, 75, 101, and 122 each coordinate S-adenosyl-L-methionine.

This sequence belongs to the class I-like SAM-binding methyltransferase superfamily. rRNA adenine N(6)-methyltransferase family. RsmA subfamily.

Its subcellular location is the cytoplasm. The catalysed reaction is adenosine(1518)/adenosine(1519) in 16S rRNA + 4 S-adenosyl-L-methionine = N(6)-dimethyladenosine(1518)/N(6)-dimethyladenosine(1519) in 16S rRNA + 4 S-adenosyl-L-homocysteine + 4 H(+). Its function is as follows. Specifically dimethylates two adjacent adenosines (A1518 and A1519) in the loop of a conserved hairpin near the 3'-end of 16S rRNA in the 30S particle. May play a critical role in biogenesis of 30S subunits. The sequence is that of Ribosomal RNA small subunit methyltransferase A from Brucella abortus (strain S19).